The following is a 305-amino-acid chain: Succinate--CoA ligase [ADP-forming] subunit alpha (305 aa).

CoA is bound by residues threonine 17–glutamate 20, lysine 43, and isoleucine 96–glutamate 98. Residue tyrosine 161 coordinates substrate. The active-site Tele-phosphohistidine intermediate is histidine 249.

The protein belongs to the succinate/malate CoA ligase alpha subunit family. In terms of assembly, heterotetramer of two alpha and two beta subunits.

The enzyme catalyses succinate + ATP + CoA = succinyl-CoA + ADP + phosphate. It carries out the reaction GTP + succinate + CoA = succinyl-CoA + GDP + phosphate. The protein operates within carbohydrate metabolism; tricarboxylic acid cycle; succinate from succinyl-CoA (ligase route): step 1/1. Functionally, succinyl-CoA synthetase functions in the citric acid cycle (TCA), coupling the hydrolysis of succinyl-CoA to the synthesis of either ATP or GTP and thus represents the only step of substrate-level phosphorylation in the TCA. The alpha subunit of the enzyme binds the substrates coenzyme A and phosphate, while succinate binding and nucleotide specificity is provided by the beta subunit. This chain is Succinate--CoA ligase [ADP-forming] subunit alpha, found in Aquifex aeolicus (strain VF5).